The chain runs to 89 residues: Small ribosomal subunit protein uS15 (89 aa).

The protein belongs to the universal ribosomal protein uS15 family. In terms of assembly, part of the 30S ribosomal subunit. Forms a bridge to the 50S subunit in the 70S ribosome, contacting the 23S rRNA.

Its function is as follows. One of the primary rRNA binding proteins, it binds directly to 16S rRNA where it helps nucleate assembly of the platform of the 30S subunit by binding and bridging several RNA helices of the 16S rRNA. In terms of biological role, forms an intersubunit bridge (bridge B4) with the 23S rRNA of the 50S subunit in the ribosome. The protein is Small ribosomal subunit protein uS15 of Bordetella parapertussis (strain 12822 / ATCC BAA-587 / NCTC 13253).